The chain runs to 77 residues: Translation initiation factor IF-1, chloroplastic (77 aa).

The S1-like domain occupies 1 to 71 (MKEQKWIHEG…TRGRIIYRLR (71 aa)).

It belongs to the IF-1 family. In terms of assembly, component of the 30S ribosomal translation pre-initiation complex which assembles on the 30S ribosome in the order IF-2 and IF-3, IF-1 and N-formylmethionyl-tRNA(fMet); mRNA recruitment can occur at any time during PIC assembly.

The protein localises to the plastid. It localises to the chloroplast. Functionally, one of the essential components for the initiation of protein synthesis. Stabilizes the binding of IF-2 and IF-3 on the 30S subunit to which N-formylmethionyl-tRNA(fMet) subsequently binds. Helps modulate mRNA selection, yielding the 30S pre-initiation complex (PIC). Upon addition of the 50S ribosomal subunit IF-1, IF-2 and IF-3 are released leaving the mature 70S translation initiation complex. This is Translation initiation factor IF-1, chloroplastic from Montinia caryophyllacea (Wild clove bush).